The primary structure comprises 322 residues: 5'-AMP-activated protein kinase subunit gamma (322 aa).

4 consecutive CBS domains span residues 37 to 97 (VSYR…NPDK), 118 to 181 (VDQL…CRET), 194 to 253 (ITQD…YNDL), and 262 to 322 (MRRS…LGSN). ADP contacts are provided by residues Ile42, Arg146, 166–169 (TQYR), and Thr195. Residues Thr195, Lys200, and 221–222 (SS) contribute to the AMP site. Residues Thr195, Lys200, and 221 to 222 (SS) contribute to the ATP site. ADP contacts are provided by residues 221–222 (SS), 291–293 (RVH), and 309–312 (TLSD). 309-312 (TLSD) is a binding site for AMP. 309–312 (TLSD) contributes to the ATP binding site.

This sequence belongs to the 5'-AMP-activated protein kinase gamma subunit family. AMPK is a heterotrimer of an alpha catalytic subunit (SNF1), a beta (SIP1, SIP2 or GAL83) and a gamma non-catalytic subunits (SNF4). Note=Interaction between SNF1 and SNF4 is inhibited by high levels of glucose.

It localises to the nucleus. Its subcellular location is the cytoplasm. Adenine nucleotides-binding subunit gamma of AMP-activated protein kinase (AMPK), an energy sensor protein kinase that plays a key role in regulating cellular energy metabolism. In response to reduction of intracellular ATP levels, AMPK activates energy-producing pathways and inhibits energy-consuming processes: inhibits protein, carbohydrate and lipid biosynthesis, as well as cell growth and proliferation. AMPK acts via direct phosphorylation of metabolic enzymes, and by longer-term effects via phosphorylation of transcription regulators. Gamma non-catalytic subunit mediates binding to AMP, ADP and ATP, leading to activate or inhibit AMPK: AMP-binding results in allosteric activation of alpha catalytic subunit (SNF1) both by inducing phosphorylation and preventing dephosphorylation of catalytic subunits. This is 5'-AMP-activated protein kinase subunit gamma (SNF4) from Saccharomyces cerevisiae (strain ATCC 204508 / S288c) (Baker's yeast).